Consider the following 1027-residue polypeptide: MKLFALFIQRPVATTLLSLAISLCGALGFMLLPVAPLPQVDYPVINIYASLPGASPETMASSVATPLERSLGRIAGIDEMTSSSALGSTSITLVFDLNKDINTAARDVQAALNASQSLLPSGMPSRPRYYKSNPSDAPIMILTLTSETQNTGELYDLASTRLAQKISQIEGVSEVSVGGGSLPAVRVALNPDALFNQNVSLDDVRKAISQSNVRRPQGFIHNDENRWQIQTNDELSKAQDYRPIIVHYNQDAIVRLSDVAQVTDSVQNARAAGMSGGEPAILLVIRREAGANIIETVNRIRDELPELRELLPASVNLKVAQDRTPTIRASLAEVERALAIAVALVILVVFLFLRSGRATLIPAVAVPVSLIGTFSAMYLCGFSLNNLSLMALTVATGFVVDDAIVVLENISRHIENGLKPKQAALKGVSEVGFTVLSMSISLVAVFIPLLLMDGLVGRLFKEFAITLTTAIGISLFVSLTLTPMMCAHLLKGIKPKAQSHLRGFGKLIFRLQQGYSVTLQAALRHKRWIMAIFITTLGLNAYLYISAPKTFFPDQDTGRLMGFVRADQSISFQSMKEKMTRFMQEINADKDVDSVTGFTGGGRINSGFMFISLNPLSERTDSANQVINRLRIKLANEPGATLFLMPVQDVRAGGRQANASYQFTLLADDLSELRKWEPLIRKALGELPELVDVNSDKEDKGAEMALTYDRDTMSQLGINVSDANNLLNNAFGQRQISTIYAPLNQYKVVMEVSEQYTQDVSALDKMYVMNTQGERIPLSAFASWYPANAPLSVNHQGLSAASTIAFNVPEGYTLSDAINAIERTMTELGVPNTVRGTFAGTAQIFQETIKSQLILILAAIVTVYIVLGVLYESYIHPLTILSTLPSAGVGALLALRLFDTPFSLIALIGIMLLIGIVKKNAIIMVDFAITAQREGKLSAQEAIIQASLLRFRPIIMTTLAALFGALPLMLSSGDGAELRQPLGITIVGGLLMSQLLTLYTTPIIYLFFDGVRQRWQQRRHNKKEANA.

Helical transmembrane passes span 16–36, 333–353, 360–380, 387–407, 431–451, 463–483, 528–548, 853–873, 875–895, 897–917, 953–973, and 984–1004; these read LLSLAISLCGALGFMLLPVAP, EVERALAIAVALVILVVFLFL, LIPAVAVPVSLIGTFSAMYLC, LSLMALTVATGFVVDDAIVVL, VGFTVLSMSISLVAVFIPLLL, FAITLTTAIGISLFVSLTLTP, WIMAIFITTLGLNAYLYISAP, LILILAAIVTVYIVLGVLYES, IHPLTILSTLPSAGVGALLAL, LFDTPFSLIALIGIMLLIGIV, PIIMTTLAALFGALPLMLSSG, and ITIVGGLLMSQLLTLYTTPII.

Belongs to the resistance-nodulation-cell division (RND) (TC 2.A.6) family. MdtC subfamily. Part of a tripartite efflux system composed of MdtA, MdtB and MdtC. MdtC forms a heteromultimer with MdtB.

The protein localises to the cell inner membrane. This Proteus mirabilis (strain HI4320) protein is Multidrug resistance protein MdtC.